Here is a 63-residue protein sequence, read N- to C-terminus: Small, acid-soluble spore protein H 2 (63 aa).

This sequence belongs to the SspH family.

It localises to the spore core. This Clostridium botulinum (strain ATCC 19397 / Type A) protein is Small, acid-soluble spore protein H 2.